We begin with the raw amino-acid sequence, 316 residues long: Neuroguidin-B (316 aa).

2 disordered regions span residues 124–169 (ENDP…SKVK) and 292–316 (VPFMKKSKKGPKKSKKKKGFSRRRH). Residues 145–156 (DERESDSGEEGA) show a composition bias toward acidic residues. Positions 296–316 (KKSKKGPKKSKKKKGFSRRRH) are enriched in basic residues.

Belongs to the SAS10 family. As to quaternary structure, part of the small subunit (SSU) processome, composed of more than 70 proteins and the RNA chaperone small nucleolar RNA (snoRNA) U3.

It is found in the nucleus. Its subcellular location is the nucleolus. The protein localises to the chromosome. It localises to the centromere. The protein resides in the cytoplasm. It is found in the cell projection. Its subcellular location is the axon. The protein localises to the dendrite. It localises to the filopodium. Its function is as follows. Part of the small subunit (SSU) processome, first precursor of the small eukaryotic ribosomal subunit. During the assembly of the SSU processome in the nucleolus, many ribosome biogenesis factors, an RNA chaperone and ribosomal proteins associate with the nascent pre-rRNA and work in concert to generate RNA folding, modifications, rearrangements and cleavage as well as targeted degradation of pre-ribosomal RNA by the RNA exosome. Its dissociation from the complex determines the transition from state pre-A1 to state pre-A1*. May inhibit mRNA translation. The protein is Neuroguidin-B (ngdn-b) of Xenopus laevis (African clawed frog).